The chain runs to 105 residues: UPF0235 protein RPR_04990 (105 aa).

The protein belongs to the UPF0235 family.

The sequence is that of UPF0235 protein RPR_04990 from Rickettsia peacockii (strain Rustic).